Reading from the N-terminus, the 144-residue chain is Large ribosomal subunit protein uL11 (144 aa).

Belongs to the universal ribosomal protein uL11 family. In terms of assembly, part of the ribosomal stalk of the 50S ribosomal subunit. Interacts with L10 and the large rRNA to form the base of the stalk. L10 forms an elongated spine to which L12 dimers bind in a sequential fashion forming a multimeric L10(L12)X complex. In terms of processing, one or more lysine residues are methylated.

Forms part of the ribosomal stalk which helps the ribosome interact with GTP-bound translation factors. The polypeptide is Large ribosomal subunit protein uL11 (Corynebacterium efficiens (strain DSM 44549 / YS-314 / AJ 12310 / JCM 11189 / NBRC 100395)).